Reading from the N-terminus, the 626-residue chain is Transketolase-like protein 2 (626 aa).

Residue His37 participates in substrate binding. Residues Ser40, His77, and 123–125 each bind thiamine diphosphate; that span reads GSL. Asp155 is a Mg(2+) binding site. 2 residues coordinate thiamine diphosphate: Gly156 and Asn185. Positions 185 and 187 each coordinate Mg(2+). The thiamine diphosphate site is built by Lys247 and His261. Substrate contacts are provided by His261 and Ser348. Thiamine diphosphate-binding residues include Glu369 and Phe395. Residue Glu369 is the Proton donor of the active site. Substrate contacts are provided by His419 and Asp427. Gln431 is a thiamine diphosphate binding site. Arg477 lines the substrate pocket.

It belongs to the transketolase family. Homodimer. It depends on Mg(2+) as a cofactor. The cofactor is Ca(2+). Mn(2+) serves as cofactor. Requires Co(2+) as cofactor. Thiamine diphosphate is required as a cofactor.

The enzyme catalyses D-sedoheptulose 7-phosphate + D-glyceraldehyde 3-phosphate = aldehydo-D-ribose 5-phosphate + D-xylulose 5-phosphate. In terms of biological role, plays an essential role in total transketolase activity and cell proliferation in cancer cells; after transfection with anti-TKTL1 siRNA, total transketolase activity dramatically decreases and proliferation was significantly inhibited in cancer cells. Plays a pivotal role in carcinogenesis. The sequence is that of Transketolase-like protein 2 (TKTL2) from Bos taurus (Bovine).